The primary structure comprises 208 residues: dTTP/UTP pyrophosphatase (208 aa).

The tract at residues 28 to 48 (DRIHPADIDETPQRAEHPRSL) is disordered. Asp-79 serves as the catalytic Proton acceptor.

Belongs to the Maf family. YhdE subfamily. Requires a divalent metal cation as cofactor.

It is found in the cytoplasm. The catalysed reaction is dTTP + H2O = dTMP + diphosphate + H(+). The enzyme catalyses UTP + H2O = UMP + diphosphate + H(+). Nucleoside triphosphate pyrophosphatase that hydrolyzes dTTP and UTP. May have a dual role in cell division arrest and in preventing the incorporation of modified nucleotides into cellular nucleic acids. The polypeptide is dTTP/UTP pyrophosphatase (Brucella abortus (strain 2308)).